Here is a 142-residue protein sequence, read N- to C-terminus: Organic hydroperoxide resistance protein-like 2 (142 aa).

The protein belongs to the OsmC/Ohr family.

The chain is Organic hydroperoxide resistance protein-like 2 from Staphylococcus saprophyticus subsp. saprophyticus (strain ATCC 15305 / DSM 20229 / NCIMB 8711 / NCTC 7292 / S-41).